We begin with the raw amino-acid sequence, 100 residues long: Integration host factor subunit alpha (100 aa).

The interval 53–72 is disordered; it reads FDLRDKRQRPGRNPKTGEEI.

Belongs to the bacterial histone-like protein family. In terms of assembly, heterodimer of an alpha and a beta chain.

Functionally, this protein is one of the two subunits of integration host factor, a specific DNA-binding protein that functions in genetic recombination as well as in transcriptional and translational control. In Pseudomonas putida (strain ATCC 700007 / DSM 6899 / JCM 31910 / BCRC 17059 / LMG 24140 / F1), this protein is Integration host factor subunit alpha.